The sequence spans 510 residues: ETS translocation variant 5 (510 aa).

The disordered stretch occupies residues 132–245 (KPLTPPATPL…PGDSRPSYHR (114 aa)). Low complexity predominate over residues 163-174 (TPGAGPVQGVGP). Residues 211–224 (QYPSEQRFQRQLSE) are compositionally biased toward polar residues. A Phosphoserine modification is found at Ser248. Lys350 is covalently cross-linked (Glycyl lysine isopeptide (Lys-Gly) (interchain with G-Cter in SUMO2)). Positions 368 to 448 (LQLWQFLVTL…AGERYVYKFV (81 aa)) form a DNA-binding region, ETS.

It belongs to the ETS family. Interacts (via C-terminal) with ZMYM5 (via N-terminal 120 amino acid region). In the brain, expressed predominantly in the cerebral cortex, the amygdala and the hypothalamus. Within the cerebral cortex, there is conspicuously high expression in cortical layers 2, 4 and 6 while expression is almost absent from layers 1, 3 and 5. High expression is also observed in the dorsal and ventral endopiriform claustrum. Strong expression is observed in limited parts of the amygdala including the basolateral amygdaloid nucleus, the bed stria terminalis and the central amygdaloid nucleus. Low to moderate levels are found in the hypothalamus while expression is almost absent in the thalamus. Hypothalamic expression is seen in the dorsomedial hypothalamic nucleus and also the central, dorsomedial and ventrolateral parts of the ventromedial hypothalamic nucleus. Strong expression is also identified in the nigrostriatal tract. In the mesencephalon, expression is restricted to the ventral tegmental area including the parabrachial pigmented nucleus. In the hippocampus, strongly expressed in the pyramidal cell layer. Some expression is also found in the lacunosum moleculare layer. Low levels of expression in the cerebellum, including the granular, molecular and Purkinje cell layers.

Its subcellular location is the nucleus. Functionally, binds to DNA sequences containing the consensus nucleotide core sequence 5'-GGAA.-3'. The chain is ETS translocation variant 5 (Etv5) from Mus musculus (Mouse).